The chain runs to 404 residues: Glucosyl-3-phosphoglycerate synthase (404 aa).

D146 serves as a coordination point for a divalent metal cation. Position 188 to 190 (188 to 190 (GRV)) interacts with (2R)-3-phosphoglycerate. An a divalent metal cation-binding site is contributed by H270.

The protein belongs to the glycosyltransferase 2 family. It depends on Mn(2+) as a cofactor. Requires Co(2+) as cofactor. The cofactor is Mg(2+).

The catalysed reaction is an NDP-alpha-D-glucose + (2R)-3-phosphoglycerate = (2R)-2-O-(alpha-D-glucopyranosyl)-3-phospho-glycerate + a ribonucleoside 5'-diphosphate + H(+). Its function is as follows. Involved in the biosynthesis of 6-O-methylglucose lipopolysaccarides (MGLPs). Catalyzes the transfer of a glucose (Glc) moiety from uridine diphosphate (UDP-Glc) to the position 2 of 3-phospho-D-glycerate (3-PGA) to form glucosyl-3-phosphoglycerate (GPG). This is Glucosyl-3-phosphoglycerate synthase from Methanococcoides burtonii (strain DSM 6242 / NBRC 107633 / OCM 468 / ACE-M).